An 891-amino-acid chain; its full sequence is DNA mismatch repair protein MutS (891 aa).

634 to 641 contacts ATP; it reads GPNMGGKS.

This sequence belongs to the DNA mismatch repair MutS family.

This protein is involved in the repair of mismatches in DNA. It is possible that it carries out the mismatch recognition step. This protein has a weak ATPase activity. This Burkholderia mallei (strain NCTC 10247) protein is DNA mismatch repair protein MutS.